The following is a 367-amino-acid chain: Protein TlpB (367 aa).

The next 5 helical transmembrane spans lie at 15-35 (ILIS…SPYF), 53-73 (IIAP…GILI), 83-103 (IIPI…YVTF), 124-144 (IQAI…FFLL), and 153-173 (FYVV…LAPI).

It localises to the membrane. The polypeptide is Protein TlpB (tlpB) (Flavobacterium psychrophilum).